Here is a 304-residue protein sequence, read N- to C-terminus: uncharacterized protein (304 aa).

G72 to T79 is a binding site for ATP.

The protein belongs to the CbbQ/NirQ/NorQ/GpvN family.

This is an uncharacterized protein from Bacillus subtilis (strain 168).